Consider the following 623-residue polypeptide: ATP-dependent lipid A-core flippase (623 aa).

Helical transmembrane passes span 66-86 (LVLAVLLMAGAAATQPTLAVI), 103-123 (VWFLPLAVVGLILLRGICNFF), 190-210 (LVVIALIGVLLYMSWALTLII), 290-310 (LTPLTQVCISVAVGAVIAVAL), and 317-337 (ALTVGSFASFMAALAQIFDPI). Positions 67–349 (VLAVLLMAGA…LTNLAGKMQK (283 aa)) constitute an ABC transmembrane type-1 domain. Positions 382–618 (VEFRAVSHRF…NGLYASLYNM (237 aa)) constitute an ABC transporter domain. Residue 416-423 (GRSGSGKT) participates in ATP binding.

The protein belongs to the ABC transporter superfamily. Lipid exporter (TC 3.A.1.106) family. Homodimer.

The protein localises to the cell inner membrane. It carries out the reaction ATP + H2O + lipid A-core oligosaccharideSide 1 = ADP + phosphate + lipid A-core oligosaccharideSide 2.. Involved in lipopolysaccharide (LPS) biosynthesis. Translocates lipid A-core from the inner to the outer leaflet of the inner membrane. Transmembrane domains (TMD) form a pore in the inner membrane and the ATP-binding domain (NBD) is responsible for energy generation. The sequence is that of ATP-dependent lipid A-core flippase from Bordetella pertussis (strain Tohama I / ATCC BAA-589 / NCTC 13251).